Consider the following 199-residue polypeptide: Imidazole glycerol phosphate synthase subunit HisH (199 aa).

The Glutamine amidotransferase type-1 domain maps to 3-199; that stretch reads NITIIDTGCA…LKNFVEKVPF (197 aa). Catalysis depends on Cys-78, which acts as the Nucleophile. Catalysis depends on residues His-178 and Glu-180.

As to quaternary structure, heterodimer of HisH and HisF.

The protein localises to the cytoplasm. The catalysed reaction is 5-[(5-phospho-1-deoxy-D-ribulos-1-ylimino)methylamino]-1-(5-phospho-beta-D-ribosyl)imidazole-4-carboxamide + L-glutamine = D-erythro-1-(imidazol-4-yl)glycerol 3-phosphate + 5-amino-1-(5-phospho-beta-D-ribosyl)imidazole-4-carboxamide + L-glutamate + H(+). It carries out the reaction L-glutamine + H2O = L-glutamate + NH4(+). It participates in amino-acid biosynthesis; L-histidine biosynthesis; L-histidine from 5-phospho-alpha-D-ribose 1-diphosphate: step 5/9. Its function is as follows. IGPS catalyzes the conversion of PRFAR and glutamine to IGP, AICAR and glutamate. The HisH subunit catalyzes the hydrolysis of glutamine to glutamate and ammonia as part of the synthesis of IGP and AICAR. The resulting ammonia molecule is channeled to the active site of HisF. In Haemophilus influenzae (strain ATCC 51907 / DSM 11121 / KW20 / Rd), this protein is Imidazole glycerol phosphate synthase subunit HisH (hisH).